Here is a 313-residue protein sequence, read N- to C-terminus: uncharacterized protein (313 aa).

Positions 8, 10, 126, 180, 207, and 262 each coordinate a divalent metal cation.

The protein belongs to the metallo-dependent hydrolases superfamily. TatD-type hydrolase family. Requires a divalent metal cation as cofactor.

Functionally, putative deoxyribonuclease. This is an uncharacterized protein from Saccharomyces cerevisiae (strain ATCC 204508 / S288c) (Baker's yeast).